We begin with the raw amino-acid sequence, 479 residues long: UDP-glycosyltransferase 85A5 (479 aa).

Residues serine 301, 358 to 360 (CPQ), 375 to 383 (HSGWNSTLE), and 397 to 400 (FAEQ) contribute to the UDP-alpha-D-glucose site.

The protein belongs to the UDP-glycosyltransferase family. As to expression, expressed in roots, shoots and leaves.

The chain is UDP-glycosyltransferase 85A5 (UGT85A5) from Arabidopsis thaliana (Mouse-ear cress).